We begin with the raw amino-acid sequence, 471 residues long: Ubiquitin-conjugating enzyme E2 variant 3 (471 aa).

The UEV domain maps to 2 to 145 (DVNSEPVKKV…EEEPPLGTKS (144 aa)). 183–211 (GDLGIAAVLSIMAKSCVDKLVLIDIPENS) contacts NAD(+).

In the N-terminal section; belongs to the ubiquitin-conjugating enzyme family. UEV subfamily. This sequence in the C-terminal section; belongs to the LDH/MDH superfamily. In terms of assembly, homodimer.

Its function is as follows. Possible negative regulator of polyubiquitination. The sequence is that of Ubiquitin-conjugating enzyme E2 variant 3 (uevld) from Danio rerio (Zebrafish).